A 426-amino-acid chain; its full sequence is Lipoyl synthase, mitochondrial (426 aa).

Residues 1–29 (MASPAPLQRLQAPLRRSLARAAVLSSRTY) constitute a mitochondrion transit peptide. Polar residues predominate over residues 27-42 (RTYATIPSPSDPGLTQ). Residues 27–61 (RTYATIPSPSDPGLTQSSPSPAASTTPAKKAPRPS) form a disordered region. A compositionally biased stretch (low complexity) spans 43–55 (SSPSPAASTTPAK). Residues C140, C145, C151, C171, C175, C178, and S388 each coordinate [4Fe-4S] cluster. A Radical SAM core domain is found at 154-377 (GNDKSAATAT…KQRALDMGFL (224 aa)).

The protein belongs to the radical SAM superfamily. Lipoyl synthase family. It depends on [4Fe-4S] cluster as a cofactor.

It localises to the mitochondrion. The catalysed reaction is [[Fe-S] cluster scaffold protein carrying a second [4Fe-4S](2+) cluster] + N(6)-octanoyl-L-lysyl-[protein] + 2 oxidized [2Fe-2S]-[ferredoxin] + 2 S-adenosyl-L-methionine + 4 H(+) = [[Fe-S] cluster scaffold protein] + N(6)-[(R)-dihydrolipoyl]-L-lysyl-[protein] + 4 Fe(3+) + 2 hydrogen sulfide + 2 5'-deoxyadenosine + 2 L-methionine + 2 reduced [2Fe-2S]-[ferredoxin]. The protein operates within protein modification; protein lipoylation via endogenous pathway; protein N(6)-(lipoyl)lysine from octanoyl-[acyl-carrier-protein]: step 2/2. Its function is as follows. Catalyzes the radical-mediated insertion of two sulfur atoms into the C-6 and C-8 positions of the octanoyl moiety bound to the lipoyl domains of lipoate-dependent enzymes, thereby converting the octanoylated domains into lipoylated derivatives. The protein is Lipoyl synthase, mitochondrial of Podospora anserina (strain S / ATCC MYA-4624 / DSM 980 / FGSC 10383) (Pleurage anserina).